The following is a 333-amino-acid chain: Biotin synthase (333 aa).

The 230-residue stretch at 40–269 (YRVQLASLLS…HARVRLSAGR (230 aa)) folds into the Radical SAM core domain. Residues cysteine 55, cysteine 59, and cysteine 62 each coordinate [4Fe-4S] cluster. 4 residues coordinate [2Fe-2S] cluster: cysteine 100, cysteine 132, cysteine 192, and arginine 264.

Belongs to the radical SAM superfamily. Biotin synthase family. As to quaternary structure, homodimer. [4Fe-4S] cluster is required as a cofactor. The cofactor is [2Fe-2S] cluster.

It catalyses the reaction (4R,5S)-dethiobiotin + (sulfur carrier)-SH + 2 reduced [2Fe-2S]-[ferredoxin] + 2 S-adenosyl-L-methionine = (sulfur carrier)-H + biotin + 2 5'-deoxyadenosine + 2 L-methionine + 2 oxidized [2Fe-2S]-[ferredoxin]. It functions in the pathway cofactor biosynthesis; biotin biosynthesis; biotin from 7,8-diaminononanoate: step 2/2. Functionally, catalyzes the conversion of dethiobiotin (DTB) to biotin by the insertion of a sulfur atom into dethiobiotin via a radical-based mechanism. This chain is Biotin synthase, found in Synechococcus sp. (strain CC9902).